The chain runs to 902 residues: Mitochondrial aspartate-glutamate transporter AGC1 (902 aa).

Solcar repeat units follow at residues 528–614 (FDSL…MRNR), 622–710 (LSLF…LKKD), and 725–813 (LKTW…FKGF). The next 6 membrane-spanning stretches (helical) occupy residues 534–554 (FSLG…IDFI), 591–611 (GPQL…NDFM), 622–642 (LSLF…VIFT), 681–702 (GLYN…IYFP), 731–751 (LTAG…FDVI), and 786–806 (FKGG…TLAA).

It belongs to the mitochondrial carrier (TC 2.A.29) family.

Its subcellular location is the mitochondrion inner membrane. In terms of biological role, calcium-dependent mitochondrial aspartate and glutamate carrier. Transport of glutamate in mitochondria is required for mitochondrial transamination reactions and ornithine synthesis. Plays also a role in malate-aspartate NADH shuttle, which is critical for growth on acetate and fatty acids. The protein is Mitochondrial aspartate-glutamate transporter AGC1 (AGC1) of Saccharomyces cerevisiae (strain ATCC 204508 / S288c) (Baker's yeast).